The chain runs to 328 residues: MEKSIWLLACLAWVLPTGSFVRTKIDTTENLLNTEVHSSPAQRWSMQVPPEVSAEAGDAAVLPCTFTHPHRHYDGPLTAIWRAGEPYAGPQVFRCAAARGSELCQTALSLHGRFRLLGNPRRNDLSLRVERLALADDRRYFCRVEFAGDVHDRYESRHGVRLHVTAAPRIVNISVLPSPAHAFRALCTAEGEPPPALAWSGPALGNSLAAVRSPREGHGHLVTAELPALTHDGRYTCTAANSLGRSEASVYLFRFHGASGASTVALLLGALGFKALLLLGVLAARAARRRPEHLDTPDTPPRSQAQESNYENLSQMNPRSPPATMCSP.

The N-terminal stretch at 1 to 19 is a signal peptide; it reads MEKSIWLLACLAWVLPTGS. Residues 20–263 are Extracellular-facing; the sequence is FVRTKIDTTE…RFHGASGAST (244 aa). Positions 40 to 158 constitute an Ig-like V-type domain; the sequence is PAQRWSMQVP…DVHDRYESRH (119 aa). 2 cysteine pairs are disulfide-bonded: Cys64–Cys142 and Cys95–Cys104. Residue Arg143 coordinates N-acetylneuraminate. One can recognise an Ig-like C2-type domain in the interval 168–251; it reads PRIVNISVLP…SLGRSEASVY (84 aa). Residue Asn172 is glycosylated (N-linked (GlcNAc...) asparagine). A disulfide bond links Cys187 and Cys237. The chain crosses the membrane as a helical span at residues 264–284; sequence VALLLGALGFKALLLLGVLAA. Topologically, residues 285 to 328 are cytoplasmic; it reads RAARRRPEHLDTPDTPPRSQAQESNYENLSQMNPRSPPATMCSP. Residues 289–328 form a disordered region; that stretch reads RRPEHLDTPDTPPRSQAQESNYENLSQMNPRSPPATMCSP. Positions 301 to 318 are enriched in polar residues; sequence PRSQAQESNYENLSQMNP.

The protein belongs to the immunoglobulin superfamily. SIGLEC (sialic acid binding Ig-like lectin) family. As to quaternary structure, interacts with TYROBP and HCST. Expressed in macrophage and/or dendritic cells of spleen and lymph nodes.

It is found in the membrane. Binds sialylated glycoproteins. The protein is Sialic acid-binding Ig-like lectin 15 (SIGLEC15) of Homo sapiens (Human).